Here is a 239-residue protein sequence, read N- to C-terminus: Aspartate/glutamate leucyltransferase (239 aa).

The protein belongs to the R-transferase family. Bpt subfamily.

The protein resides in the cytoplasm. It catalyses the reaction N-terminal L-glutamyl-[protein] + L-leucyl-tRNA(Leu) = N-terminal L-leucyl-L-glutamyl-[protein] + tRNA(Leu) + H(+). It carries out the reaction N-terminal L-aspartyl-[protein] + L-leucyl-tRNA(Leu) = N-terminal L-leucyl-L-aspartyl-[protein] + tRNA(Leu) + H(+). Functions in the N-end rule pathway of protein degradation where it conjugates Leu from its aminoacyl-tRNA to the N-termini of proteins containing an N-terminal aspartate or glutamate. This chain is Aspartate/glutamate leucyltransferase, found in Alkalilimnicola ehrlichii (strain ATCC BAA-1101 / DSM 17681 / MLHE-1).